The primary structure comprises 536 residues: Uridine 5'-monophosphate transferase (536 aa).

The tract at residues 22–84 is disordered; sequence ADHPTHTPED…GLQQCSSSPS (63 aa). The span at 31–45 shows a compositional bias: polar residues; sequence DSPQTVPSPRSSSAH. Basic and acidic residues predominate over residues 48 to 60; sequence EIQELRSLQETRP. A compositionally biased stretch (polar residues) spans 66–84; sequence RSQSRSSKHGLQQCSSSPS. LRR repeat units follow at residues 140–164, 165–189, 191–211, 212–234, 236–257, and 258–282; these read AGQAGTQLTLRDLNLSQLPPGLHRL, AHLRDLDVADNVNLTRLPEDLSLCK, LERINADGCSIAALPSKIGAL, KNLSEISLAFNELRTLPDSIGQC, SLTTIVVPGCKINKLPASLANL, and TQLKKLDVAANIELSELSPHMNLDD. Residues 377-533 enclose the Fido domain; that stretch reads ITLDRIFKLN…LEGIATVMNQ (157 aa).

It in the C-terminal section; belongs to the fic family. As to quaternary structure, interacts with several members of the Arabidopsis RLCK VIIa subfamily.

The protein resides in the secreted. The protein localises to the host cell. It localises to the host cell membrane. It catalyses the reaction L-seryl-[protein] + UTP = O-(5'-uridylyl)-L-seryl-[protein] + diphosphate. The catalysed reaction is L-threonyl-[protein] + UTP = uridylyl-L-threonyl-[protein] + diphosphate. Its function is as follows. Functions both as a virulence and an avirulence gene in Arabidopsis. Causes disease on the Kashmir (Kas) ecotype, but not on Columbia (Col-0) ecotype. Acts by directly uridylylating the conserved phosphorylation sites in the activation loop of a number of host receptor-like cytoplasmic protein kinases (RLCK), including BIK1, RIPK, PBL1 and PBL2, preventing the activation of these kinases and subsequent signal transduction. In susceptible Arabidopsis plants, uridylylation of BIK1 inhibits the PAMP-triggered immunity (PTI) signaling cascade and thereby promotes bacterial virulence. It also inhibits RPM1-dependent effector-triggered immunity (ETI) in mesophyll tissues by targeting RIPK. In contrast, in the resistant ecotype Col-0, xopAC is a major avirulence gene. Uridylylation of PBL2 triggers the PBL2-RKS1 interaction and thus the assembly of the PBL2-RKS1-ZAR1 complex, which, in turn, activates effector-triggered immunity (ETI) against X.campestris. This Xanthomonas campestris pv. campestris (strain 8004) protein is Uridine 5'-monophosphate transferase.